Reading from the N-terminus, the 120-residue chain is MSAQEIIRSIEAEQLKSNLPEIYIGDTVRVGVKIKEGEKYRVQPYEGVVIARRNGGINETITVRRVFQGVGVERVFLLHSPRIDNIKVLRRGKVRRAKLYYLRGRVGKATRIKQRFDRSL.

The protein belongs to the bacterial ribosomal protein bL19 family.

Functionally, this protein is located at the 30S-50S ribosomal subunit interface and may play a role in the structure and function of the aminoacyl-tRNA binding site. The chain is Large ribosomal subunit protein bL19 (rplS) from Nostoc sp. (strain PCC 7120 / SAG 25.82 / UTEX 2576).